A 1505-amino-acid polypeptide reads, in one-letter code: Myosin-6 (1505 aa).

Positions Ser-8–Val-57 constitute a Myosin N-terminal SH3-like domain. A Myosin motor domain is found at Ser-62–Thr-731. Residues Gly-156–Thr-163 and Asn-209–Lys-217 each bind ATP. 4 actin-binding regions span residues Leu-495 to Phe-529, Thr-531 to Val-554, Phe-589 to Leu-612, and Leu-612 to Asn-634. 6 IQ domains span residues Leu-734–Gln-763, Leu-757–Ala-786, Arg-782–Ser-811, Leu-805–Ala-834, Gln-830–Thr-859, and Leu-853–Glu-882. Positions Thr-883–Thr-1048 form a coiled coil. Positions Asp-1148–Glu-1452 constitute a Dilute domain.

The protein belongs to the TRAFAC class myosin-kinesin ATPase superfamily. Myosin family. Plant myosin class XI subfamily. Homodimer. Interacts with RABC2A and RABD1. As to expression, expressed in flowers, leaves, roots and stems.

It is found in the cytoplasm. Its function is as follows. Myosin heavy chain that is required for the cell cycle-regulated transport of various organelles and proteins for their segregation. Functions by binding with its tail domain to receptor proteins on organelles and exerting force with its N-terminal motor domain against actin filaments, thereby transporting its cargo along polarized actin cables. Involved in the tip growth of root hair cells. Plays a major role in trafficking of Golgi stacks, mitochondria and peroxisomes during root hair development. Targets the peroxisome through an interaction with RABC2A. Required for development of pavement cells, trichomes, and stigmatic papillae. In Arabidopsis thaliana (Mouse-ear cress), this protein is Myosin-6 (XI-2).